Reading from the N-terminus, the 311-residue chain is Apolipoprotein E (311 aa).

Positions 1–18 (MKALWAVLLVTLLTGCLA) are cleaved as a signal peptide. 8 repeat units span residues 72–93 (ALMEDTMTEVKAYKKELEEQLG), 94–115 (PVAEETRARLGKEVQAAQARLG), 116–137 (ADMEDLRNRLGQYRNEVHTMLG), 138–159 (QSTEEIRARLSTHLRKMRKRLM), 160–181 (RDAEDLQKRLAVYKAGAREGAE), 182–203 (RGVSAIRERLGPLVEQGRQRTA), 204–225 (NLGAGAAQPLRDRAQAFGDRIR), and 226–247 (GRLEEVGNQARDRLEEVREHME). Residues 72-247 (ALMEDTMTEV…RLEEVREHME (176 aa)) form an 8 X 22 AA approximate tandem repeats region. The residue at position 135 (Met135) is a Methionine sulfoxide. Ser139 bears the Phosphoserine mark. An LDL and other lipoprotein receptors binding region spans residues 150 to 160 (HLRKMRKRLMR). 154 to 157 (MRKR) contributes to the heparin binding site. A lipid-binding and lipoprotein association region spans residues 202 to 282 (TANLGAGAAQ…GWFEPIVEDM (81 aa)). A heparin-binding site is contributed by 221 to 228 (GDRIRGRL). Residues 258 to 311 (QQIRLQAEIFQARLKGWFEPIVEDMHRQWANLMEKIQASVATNPIITPVAQENQ) are homooligomerization. Positions 270–282 (RLKGWFEPIVEDM) are specificity for association with VLDL.

Belongs to the apolipoprotein A1/A4/E family. Homotetramer. May interact with ABCA1; functionally associated with ABCA1 in the biogenesis of HDLs. May interact with APP/A4 amyloid-beta peptide; the interaction is extremely stable in vitro but its physiological significance is unclear. May interact with MAPT. May interact with MAP2. In the cerebrospinal fluid, interacts with secreted SORL1. Interacts with PMEL; this allows the loading of PMEL luminal fragment on ILVs to induce fibril nucleation. APOE exists as multiple glycosylated and sialylated glycoforms within cells and in plasma. The extent of glycosylation and sialylation are tissue and context specific. In terms of processing, glycated in plasma VLDL. Post-translationally, phosphorylated by FAM20C in the extracellular medium.

It is found in the secreted. Its subcellular location is the extracellular space. The protein resides in the extracellular matrix. It localises to the extracellular vesicle. The protein localises to the endosome. It is found in the multivesicular body. Its function is as follows. APOE is an apolipoprotein, a protein associating with lipid particles, that mainly functions in lipoprotein-mediated lipid transport between organs via the plasma and interstitial fluids. APOE is a core component of plasma lipoproteins and is involved in their production, conversion and clearance. Apolipoproteins are amphipathic molecules that interact both with lipids of the lipoprotein particle core and the aqueous environment of the plasma. As such, APOE associates with chylomicrons, chylomicron remnants, very low density lipoproteins (VLDL) and intermediate density lipoproteins (IDL) but shows a preferential binding to high-density lipoproteins (HDL). It also binds a wide range of cellular receptors including the LDL receptor/LDLR and the very low-density lipoprotein receptor/VLDLR that mediate the cellular uptake of the APOE-containing lipoprotein particles. Finally, APOE also has a heparin-binding activity and binds heparan-sulfate proteoglycans on the surface of cells, a property that supports the capture and the receptor-mediated uptake of APOE-containing lipoproteins by cells. The chain is Apolipoprotein E (Apoe) from Mus musculus (Mouse).